The following is a 242-amino-acid chain: Agamous-like MADS-box protein MADS4 (242 aa).

In terms of domain architecture, MADS-box spans 1–61 (MGRGRVELKR…GKLYEFCSSS (61 aa)). Residues 89-185 (ELSSQQEYLK…GTQVNQLQWN (97 aa)) form the K-box domain.

Expressed in flowers and seeds.

The protein localises to the nucleus. In terms of biological role, probable transcription factor involved in flower development. The chain is Agamous-like MADS-box protein MADS4 from Vitis vinifera (Grape).